Here is a 200-residue protein sequence, read N- to C-terminus: Orotate phosphoribosyltransferase (200 aa).

5-phospho-alpha-D-ribose 1-diphosphate is bound by residues R95, K99, H101, and 121-129 (DDVATTGGS). Residues T125 and R153 each coordinate orotate.

This sequence belongs to the purine/pyrimidine phosphoribosyltransferase family. PyrE subfamily. Homodimer. Mg(2+) is required as a cofactor.

It catalyses the reaction orotidine 5'-phosphate + diphosphate = orotate + 5-phospho-alpha-D-ribose 1-diphosphate. Its pathway is pyrimidine metabolism; UMP biosynthesis via de novo pathway; UMP from orotate: step 1/2. Catalyzes the transfer of a ribosyl phosphate group from 5-phosphoribose 1-diphosphate to orotate, leading to the formation of orotidine monophosphate (OMP). This Cenarchaeum symbiosum (strain A) protein is Orotate phosphoribosyltransferase.